Reading from the N-terminus, the 412-residue chain is Putative disintegrin and metalloproteinase domain-containing protein 5 (412 aa).

The 89-residue stretch at 111–199 (EKYADTNILL…YCLPDTYVRD (89 aa)) folds into the Disintegrin domain. Residues 351 to 385 (NLKLCDASNHCDRHGVCNNFNHCHCEKGYNPPYCQ) form the EGF-like domain.

As to quaternary structure, interacts with TEX101. Highly expressed in testis.

Functionally, this is a non catalytic metalloprotease-like protein. The chain is Putative disintegrin and metalloproteinase domain-containing protein 5 (ADAM5) from Homo sapiens (Human).